Consider the following 81-residue polypeptide: Three-finger toxin MALT0051C (81 aa).

The N-terminal stretch at 1-21 (MKTLLLTLVVVTVVCLDFGHT) is a signal peptide. 4 disulfide bridges follow: C24/C43, C38/C60, C62/C73, and C74/C79.

It belongs to the three-finger toxin family. Short-chain subfamily. Type I alpha-neurotoxin sub-subfamily. As to expression, expressed by the venom gland.

Its subcellular location is the secreted. Its function is as follows. Binds to muscle nicotinic acetylcholine receptor (nAChR) and inhibit acetylcholine from binding to the receptor, thereby impairing neuromuscular transmission. This chain is Three-finger toxin MALT0051C, found in Micrurus altirostris (Uruguayan coral snake).